The following is a 100-amino-acid chain: Large ribosomal subunit protein uL23 (100 aa).

It belongs to the universal ribosomal protein uL23 family. As to quaternary structure, part of the 50S ribosomal subunit. Contacts protein L29, and trigger factor when it is bound to the ribosome.

Functionally, one of the early assembly proteins it binds 23S rRNA. One of the proteins that surrounds the polypeptide exit tunnel on the outside of the ribosome. Forms the main docking site for trigger factor binding to the ribosome. This chain is Large ribosomal subunit protein uL23, found in Aeromonas hydrophila subsp. hydrophila (strain ATCC 7966 / DSM 30187 / BCRC 13018 / CCUG 14551 / JCM 1027 / KCTC 2358 / NCIMB 9240 / NCTC 8049).